Here is a 469-residue protein sequence, read N- to C-terminus: Interstitial collagenase (469 aa).

The signal sequence occupies residues 1–18 (MPRLPLLLLLLWGTGSHG). Positions 19-99 (FPAATSETQE…PRCGVPDVAP (81 aa)) are cleaved as a propeptide — activation peptide. The Cysteine switch motif lies at 90–97 (PRCGVPDV). C92 serves as a coordination point for Zn(2+). N-linked (GlcNAc...) asparagine glycosylation occurs at N120. The Ca(2+) site is built by D124 and D158. 2 residues coordinate Zn(2+): H168 and D170. Ca(2+)-binding residues include D175, G176, G178, and N180. H183 is a Zn(2+) binding site. G190, G192, and D194 together coordinate Ca(2+). H196 serves as a coordination point for Zn(2+). 3 residues coordinate Ca(2+): D198, D199, and E201. Residue H218 coordinates Zn(2+). The active site involves E219. Zn(2+) is bound by residues H222 and H228. At T274 the chain carries Phosphothreonine. 4 Hemopexin repeats span residues 275-324 (PEVC…WPQL), 325-371 (PNGL…FGFP), 374-422 (VKSI…FPGI), and 423-466 (GNKV…WFNC). C278 and C466 form a disulfide bridge. 2 residues coordinate Ca(2+): D285 and Q329. At Y360 the chain carries Phosphotyrosine; by PKDCC. The Ca(2+) site is built by D378 and D427.

It belongs to the peptidase M10A family. It depends on Ca(2+) as a cofactor. Zn(2+) is required as a cofactor. Tyrosine phosphorylated in platelets by PKDCC/VLK.

The protein resides in the secreted. Its subcellular location is the extracellular space. It localises to the extracellular matrix. It catalyses the reaction Cleavage of the triple helix of collagen at about three-quarters of the length of the molecule from the N-terminus, at 775-Gly-|-Ile-776 in the alpha1(I) chain. Cleaves synthetic substrates and alpha-macroglobulins at bonds where P1' is a hydrophobic residue.. Can be activated without removal of the activation peptide. Functionally, cleaves collagens of types I, II, and III at one site in the helical domain. Also cleaves collagens of types VII and X. The polypeptide is Interstitial collagenase (MMP1) (Bos taurus (Bovine)).